We begin with the raw amino-acid sequence, 1279 residues long: Sterol regulatory element-binding protein cleavage-activating protein (1279 aa).

Topologically, residues 1–18 (MTLTERLREKISQAFYNH) are cytoplasmic. A helical membrane pass occupies residues 19–39 (GLLCASYPIPIILFTGLCILA). Topologically, residues 40 to 279 (CCYPLLKLPL…SLVHVHFKEE (240 aa)) are lumenal. Residues 46-284 (KLPLPGTGPV…HFKEEIGIAE (239 aa)) are loop-1. The disordered stretch occupies residues 60 to 81 (PVKDYSPPPSASDHKPGEPSEQ). A glycan (N-linked (GlcNAc...) asparagine) is linked at Asn263. The helical transmembrane segment at 280-300 (IGIAELIPLVTTYIILFAYIY) threads the bilayer. Residues 284–442 (ELIPLVTTYI…MPFFTTVLSI (159 aa)) form the SSD domain. Residues 301–312 (FSTRKIDMVKSK) lie on the Cytoplasmic side of the membrane. The helical transmembrane segment at 313 to 333 (WGLALAAVVTVLSSLLMSVGL) threads the bilayer. The Lumenal segment spans residues 334 to 344 (CTLFGLTPTLN). The chain crosses the membrane as a helical span at residues 345–365 (GGEIFPYLVVVIGLENVLVLT). The Cytoplasmic portion of the chain corresponds to 366–401 (KSVVSTPVDLEVKLRIAQGLSSESWSIMKNMATELG). A helical membrane pass occupies residues 402–422 (IILIGYFTLVPAIQEFCLFAV). Residue Val423 is a topological domain, lumenal. A helical transmembrane segment spans residues 424-444 (GLVSDFFLQMPFFTTVLSIDI). The Cytoplasmic segment spans residues 445 to 518 (RRMELADLNK…FLARTRLAQR (74 aa)). The ER export signal signature appears at 447-452 (MELADL). Residues Lys454 and Lys466 each participate in a glycyl lysine isopeptide (Lys-Gly) (interchain with G-Cter in ubiquitin) cross-link. A helical transmembrane segment spans residues 519–539 (LIMAGTVVWIGILAYTDPAGL). The segment at 535 to 710 (DPAGLRTYLA…QAHRDVTLYK (176 aa)) is loop-7. The Lumenal portion of the chain corresponds to 540–707 (RTYLAAQVTE…GVAQAHRDVT (168 aa)). Positions 588–617 (LENQTLPGEPPEPGGQAEGVHDSPAPEVTW) are disordered. N-linked (GlcNAc...) asparagine glycans are attached at residues Asn590 and Asn641. The interval 668 to 696 (EGRHPQDSRSAWSPPQPAQGGLWDAGPKG) is disordered. The chain crosses the membrane as a helical span at residues 708–728 (LYKVAALGLATGILLVLLLCL). Topologically, residues 729 to 1279 (YRVLCPRNYG…YVPSVLEKLD (551 aa)) are cytoplasmic. Positions 730–1279 (RVLCPRNYGQ…YVPSVLEKLD (550 aa)) are interaction with SREBF2. A WD 1 repeat occupies 770 to 810 (VLRGHLMDIECLASDGMLLVSCCLAGHVCVWDAQTGDCLTR). A phosphoserine mark is found at Ser821, Ser837, Ser843, and Ser850. Disordered regions lie at residues 834 to 868 (ERLS…LFGD), 883 to 903 (HPRL…CRRT), and 925 to 959 (VPMH…GSPS). The span at 885–896 (RLPELDHPEPRH) shows a compositional bias: basic and acidic residues. Over residues 929-944 (TPAPRPPSPGPTPPQT) the composition is skewed to pro residues. Position 936 is a phosphoserine (Ser936). WD repeat units lie at residues 952 to 1002 (PPEK…LRCS) and 1005 to 1042 (EVAS…ALSP). An Omega-N-methylarginine modification is found at Arg1051. WD repeat units follow at residues 1077–1114 (AHQK…CLFT), 1117–1155 (GHSG…RVSH), 1158–1195 (AHRG…KLYS), and 1197–1235 (QQDL…LLQT).

The protein belongs to the WD repeat SCAP family. Membrane region forms a homotetramer. Component of the SCAP-SREBP complex (composed of SCAP and SREBF1/SREBP1 or SREBF2/SREBP2); interacts with SREBF1/SREBP1 or SREBF2/SREBP2 through its C-terminal cytoplasmic domain. Forms a ternary complex with INSIG1 or INSIG2 through its transmembrane domains at high sterol concentrations. Interacts with PAQR3; the interaction anchors the SCAP-SREBP complex to the Golgi apparatus in low cholesterol conditions. Interacts with the SEC23-SEC24 complex in a SAR1-GTP-dependent manner through an ER export signal in its third cytoplasmic loop. Interacts with RNF139; the interaction inhibits the interaction of SCAP with SEC24B and hampering the ER to Golgi transport of the SCAP-SREBP complex. Interacts with SPRING1. In terms of processing, ubiquitinated at Lys-454 and Lys-466. RNF145 triggers ubiquitination of SCAP, likely inhibiting SCAP-SREBP complex transport to the Golgi apparatus and the subsequent processing/maturation of SREBF2/SREBP2. As to expression, widely expressed with higher levels in lung, kidney, gut, brain and adipose tissue. Expressed in liver and muscle. Isoform 3 expressed in testis. In terms of tissue distribution, expressed in testis.

It is found in the endoplasmic reticulum membrane. The protein resides in the golgi apparatus membrane. The protein localises to the cytoplasmic vesicle. It localises to the COPII-coated vesicle membrane. Escort protein required for cholesterol as well as lipid homeostasis. Regulates export of the SCAP-SREBP complex from the endoplasmic reticulum to the Golgi upon low cholesterol, thereby regulating the processing of sterol regulatory element-binding proteins (SREBPs) SREBF1/SREBP1 and SREBF2/SREBP2. At high sterol concentrations, formation of a ternary complex with INSIG (INSIG1 or INSIG2) leads to mask the ER export signal in SCAP, promoting retention of the complex in the endoplasmic reticulum. Low sterol concentrations trigger release of INSIG, a conformational change in the SSD domain of SCAP, unmasking of the ER export signal, promoting recruitment into COPII-coated vesicles and transport of the SCAP-SREBP to the Golgi: in the Golgi, SREBPs are then processed, releasing the transcription factor fragment of SREBPs from the membrane, its import into the nucleus and up-regulation of LDLR, INSIG1 and the mevalonate pathway. Binds cholesterol via its SSD domain. In Sus scrofa (Pig), this protein is Sterol regulatory element-binding protein cleavage-activating protein.